We begin with the raw amino-acid sequence, 88 residues long: RQC P-site tRNA stabilizing factor (88 aa).

One can recognise an S4 RNA-binding domain in the interval 1–60 (MRLDKYLKVSRIIKRRTVAKEVADKGRIKVNGILAKSSTDLKVNDQVEIRFGNKLLLVKV).

Belongs to the RqcP family. In terms of assembly, associates with stalled 50S ribosomal subunits. Binds to RqcH, 23S rRNA and the P-site tRNA. Does not require RqcH for association with 50S subunits.

Its function is as follows. Key component of the ribosome quality control system (RQC), a ribosome-associated complex that mediates the extraction of incompletely synthesized nascent chains from stalled ribosomes and their subsequent degradation. RqcH recruits Ala-charged tRNA, and with RqcP directs the elongation of stalled nascent chains on 50S ribosomal subunits, leading to non-templated C-terminal alanine extensions (Ala tail). The Ala tail promotes nascent chain degradation. RqcP is associated with the translocation-like movement of the peptidyl-tRNA from the A-site into the P-site. The protein is RQC P-site tRNA stabilizing factor of Streptococcus pneumoniae (strain ATCC BAA-255 / R6).